The following is a 238-amino-acid chain: Ribonuclease PH (238 aa).

Phosphate contacts are provided by residues R86 and 124-126; that span reads GTR.

Belongs to the RNase PH family. Homohexameric ring arranged as a trimer of dimers.

It catalyses the reaction tRNA(n+1) + phosphate = tRNA(n) + a ribonucleoside 5'-diphosphate. Functionally, phosphorolytic 3'-5' exoribonuclease that plays an important role in tRNA 3'-end maturation. Removes nucleotide residues following the 3'-CCA terminus of tRNAs; can also add nucleotides to the ends of RNA molecules by using nucleoside diphosphates as substrates, but this may not be physiologically important. Probably plays a role in initiation of 16S rRNA degradation (leading to ribosome degradation) during starvation. The chain is Ribonuclease PH from Edwardsiella ictaluri (strain 93-146).